The primary structure comprises 356 residues: Glutamine synthetase cytosolic isozyme (356 aa).

Residues 19–99 (IIAEYIWIGG…VMCDAYTPAG (81 aa)) form the GS beta-grasp domain. The interval 38–66 (RTLPGPVTDPSQLPKWNYDGSSTGQAPGE) is disordered. A GS catalytic domain is found at 106–356 (KRHAAAKIFS…IADTTILWKP (251 aa)).

This sequence belongs to the glutamine synthetase family. Homooctamer.

The protein localises to the cytoplasm. The enzyme catalyses L-glutamate + NH4(+) + ATP = L-glutamine + ADP + phosphate + H(+). The sequence is that of Glutamine synthetase cytosolic isozyme from Medicago sativa (Alfalfa).